The primary structure comprises 161 residues: MNVKGRVFKYGDNVDTDVIIPARYLNTSNHKELASHCMEDIDKEFVNNVKDGDIIVANKNFGCGSSREHAPIAIKAAGISCVIASTFARIFYRNSINIGLPILECDEAVKNINHGDELEVDFSTGIIKNLSKNEQYQGEAFPEFMQKIIDNDGLIGYIRNK.

The protein belongs to the LeuD family. LeuD type 2 subfamily. In terms of assembly, heterodimer of LeuC and LeuD.

The catalysed reaction is (2R,3S)-3-isopropylmalate = (2S)-2-isopropylmalate. Its pathway is amino-acid biosynthesis; L-leucine biosynthesis; L-leucine from 3-methyl-2-oxobutanoate: step 2/4. Its function is as follows. Catalyzes the isomerization between 2-isopropylmalate and 3-isopropylmalate, via the formation of 2-isopropylmaleate. This is 3-isopropylmalate dehydratase small subunit from Clostridium botulinum (strain Eklund 17B / Type B).